A 585-amino-acid chain; its full sequence is Aspartate--tRNA ligase (585 aa).

Glu-173 is a binding site for L-aspartate. Residues 197–200 (QTLK) are aspartate. Arg-219 contacts L-aspartate. Residues 219-221 (RDE) and Gln-228 each bind ATP. Residue His-446 coordinates L-aspartate. An ATP-binding site is contributed by Glu-480. Arg-487 serves as a coordination point for L-aspartate. 532 to 535 (GLDR) is an ATP binding site.

Belongs to the class-II aminoacyl-tRNA synthetase family. Type 1 subfamily. In terms of assembly, homodimer.

It is found in the cytoplasm. It catalyses the reaction tRNA(Asp) + L-aspartate + ATP = L-aspartyl-tRNA(Asp) + AMP + diphosphate. Catalyzes the attachment of L-aspartate to tRNA(Asp) in a two-step reaction: L-aspartate is first activated by ATP to form Asp-AMP and then transferred to the acceptor end of tRNA(Asp). The polypeptide is Aspartate--tRNA ligase (Bacteroides fragilis (strain YCH46)).